Consider the following 422-residue polypeptide: Solanesyl diphosphate synthase 3, chloroplastic/mitochondrial (422 aa).

The transit peptide at 1–32 (MLFTRSVARISSKFLRNRSFYGSSQSLASHRF) directs the protein to the chloroplast and mitochondrion. Isopentenyl diphosphate is bound by residues lysine 125, arginine 128, and histidine 174. Positions 181 and 185 each coordinate Mg(2+). Arginine 190 contacts an all-trans-polyprenyl diphosphate. Arginine 191 contacts isopentenyl diphosphate. An all-trans-polyprenyl diphosphate contacts are provided by lysine 267, threonine 268, glutamine 305, and lysine 322.

The protein belongs to the FPP/GGPP synthase family. As to quaternary structure, homodimer. Mg(2+) is required as a cofactor. In terms of tissue distribution, ubiquitous. Highest expression in seeds and shoot apical meristem.

The protein localises to the plastid. It is found in the chloroplast. Its subcellular location is the mitochondrion. It catalyses the reaction 5 isopentenyl diphosphate + (2E,6E,10E)-geranylgeranyl diphosphate = all-trans-nonaprenyl diphosphate + 5 diphosphate. In terms of biological role, may be involved in the supply of solanesyl diphosphate for ubiquinone-9 (UQ-9) biosynthesis in mitochondria. Synthesizes C25 to C45 medium / long-chain products depending on the type of substrate available. Can use geranyl diphosphate, farnesyl diphosphate or geranylgeranyl diphosphate as substrates, but not dimethylallyl diphosphate. This chain is Solanesyl diphosphate synthase 3, chloroplastic/mitochondrial, found in Arabidopsis thaliana (Mouse-ear cress).